Reading from the N-terminus, the 960-residue chain is Phosphoenolpyruvate carboxylase 1 (960 aa).

At Ser7 the chain carries Phosphoserine. Residues His168 and Lys596 contribute to the active site.

Belongs to the PEPCase type 1 family. As to quaternary structure, homotetramer. Mg(2+) is required as a cofactor.

It localises to the cytoplasm. It catalyses the reaction oxaloacetate + phosphate = phosphoenolpyruvate + hydrogencarbonate. Its pathway is photosynthesis; C3 acid pathway. With respect to regulation, by light-reversible phosphorylation. In terms of biological role, through the carboxylation of phosphoenolpyruvate (PEP) it forms oxaloacetate, a four-carbon dicarboxylic acid source for the tricarboxylic acid cycle. This is Phosphoenolpyruvate carboxylase 1 (PEPC) from Sorghum bicolor (Sorghum).